Consider the following 239-residue polypeptide: 7-cyano-7-deazaguanine synthase (239 aa).

7–17 (LSGGIDSSTLL) is a binding site for ATP. Positions 184, 192, 195, and 198 each coordinate Zn(2+).

The protein belongs to the QueC family. Zn(2+) serves as cofactor.

It catalyses the reaction 7-carboxy-7-deazaguanine + NH4(+) + ATP = 7-cyano-7-deazaguanine + ADP + phosphate + H2O + H(+). The protein operates within purine metabolism; 7-cyano-7-deazaguanine biosynthesis. Catalyzes the ATP-dependent conversion of 7-carboxy-7-deazaguanine (CDG) to 7-cyano-7-deazaguanine (preQ(0)). This is 7-cyano-7-deazaguanine synthase from Archaeoglobus fulgidus (strain ATCC 49558 / DSM 4304 / JCM 9628 / NBRC 100126 / VC-16).